We begin with the raw amino-acid sequence, 571 residues long: Urease subunit alpha (571 aa).

Positions Gly-133–Phe-571 constitute a Urease domain. The Ni(2+) site is built by His-138, His-140, and Lys-221. An N6-carboxylysine modification is found at Lys-221. His-223 is a binding site for substrate. Residues His-250 and His-276 each coordinate Ni(2+). His-324 acts as the Proton donor in catalysis. Asp-364 is a Ni(2+) binding site.

The protein belongs to the metallo-dependent hydrolases superfamily. Urease alpha subunit family. In terms of assembly, heterotrimer of UreA (gamma), UreB (beta) and UreC (alpha) subunits. Three heterotrimers associate to form the active enzyme. Requires Ni cation as cofactor. In terms of processing, carboxylation allows a single lysine to coordinate two nickel ions.

It localises to the cytoplasm. It carries out the reaction urea + 2 H2O + H(+) = hydrogencarbonate + 2 NH4(+). The protein operates within nitrogen metabolism; urea degradation; CO(2) and NH(3) from urea (urease route): step 1/1. The protein is Urease subunit alpha of Anaeromyxobacter sp. (strain Fw109-5).